Reading from the N-terminus, the 147-residue chain is Ribonuclease H (147 aa).

Positions 1 to 142 (MTEIVEIFTD…ADALARSAIT (142 aa)) constitute an RNase H type-1 domain. Mg(2+) contacts are provided by Asp10, Glu48, Asp70, and Asp134.

The protein belongs to the RNase H family. Monomer. The cofactor is Mg(2+).

It is found in the cytoplasm. It catalyses the reaction Endonucleolytic cleavage to 5'-phosphomonoester.. Its function is as follows. Endonuclease that specifically degrades the RNA of RNA-DNA hybrids. This chain is Ribonuclease H, found in Nitrosococcus oceani (strain ATCC 19707 / BCRC 17464 / JCM 30415 / NCIMB 11848 / C-107).